Consider the following 211-residue polypeptide: Large ribosomal subunit protein bL25 (211 aa).

The interval 188–211 (HREEEKAPEETGEAAPAPTPETGQ) is disordered. Residues 200 to 211 (EAAPAPTPETGQ) are compositionally biased toward low complexity.

This sequence belongs to the bacterial ribosomal protein bL25 family. CTC subfamily. Part of the 50S ribosomal subunit; part of the 5S rRNA/L5/L18/L25 subcomplex. Contacts the 5S rRNA. Binds to the 5S rRNA independently of L5 and L18.

In terms of biological role, this is one of the proteins that binds to the 5S RNA in the ribosome where it forms part of the central protuberance. In Desulforudis audaxviator (strain MP104C), this protein is Large ribosomal subunit protein bL25.